The primary structure comprises 56 residues: Large ribosomal subunit protein bL33 (56 aa).

It belongs to the bacterial ribosomal protein bL33 family.

The sequence is that of Large ribosomal subunit protein bL33 from Nocardioides sp. (strain ATCC BAA-499 / JS614).